Consider the following 153-residue polypeptide: Suppressor of RNA silencing (153 aa).

The C-1 stretch occupies residues 1–23; that stretch reads MMATFSCVCCGTSTTSTYCGKRC. Positions 1–85 are interaction with TGB1; it reads MMATFSCVCC…IVSRFCGQKH (85 aa). The basic motif (BM) stretch occupies residues 19–47; it reads CGKRCERKHVYSETRNKRLELYKKYLLEP. Positions 60 to 85 are C-2; it reads CGMPCSIAEEACDQLPIVSRFCGQKH. An interaction with replication protein alpha-A region spans residues 86–127; the sequence is ADLYDSLLKRSEQELLLEFLQKKMQELKLSHIVKMAKLESEV. Positions 92–132 form a coiled coil; the sequence is LLKRSEQELLLEFLQKKMQELKLSHIVKMAKLESEVNAIRK. Phosphoserine is present on Ser-96.

Belongs to the virgaviridae suppressor of RNA silencing family. As to quaternary structure, homooligomer. Interacts (via C-terminus) with replication protein alpha-A. Interacts (via N-terminus) with the movement protein TGB1; this interaction targets gammab-TGB1 at the periphery of chloroplasts and plasmodesmata. Interacts with host autophagy protein ATG7; this interaction disrupts the host ATG7-ATG8 interaction to promote viral infection. Interacts (via BM region) with host STY46; this interaction inhibits the viral infection. In terms of processing, phosphorylated at Ser-96 by a host PKA-like kinase; the phosphorylation at this site seems to suppress host cell death. Post-translationally, serine-phosphorylated by host STY46 kinase.

Its subcellular location is the host chloroplast envelope. The protein localises to the host endoplasmic reticulum. It is found in the host cell junction. The protein resides in the host plasmodesma. In terms of biological role, suppressor of RNA-mediated gene silencing, also known as post-transcriptional gene silencing (PTGS), a mechanism of plant viral defense that limits the accumulation of viral RNAs. Promotes viral cell-to-cell long distance movement by enhancing the ATPase activity of TGB1. Enhances RNA helicase activity of replication protein alpha-A. Suppresses autophagy induced by the host as a defense mechanism against viral infection. The sequence is that of Suppressor of RNA silencing from Barley stripe mosaic virus (BSMV).